Reading from the N-terminus, the 498-residue chain is MDATTGAVLYQKLQLWEPGMESEEEEEEEEIAEPLVLSLRRLQNTPGNKVGGLPGAWTRLLAGLLLLAVSSSLALRQLQGRNSPKGNLGPVDLPASRHSHHPGVYHHSAVISPAATCSRLGQELLVAGGNVVDAGVGAALCLAVVHPHATGLGATFWGLFYNSSSGNSTALTAGPAQILAPGLGLPTALPALHLLHTHFGRLPWSHLLAKPAMLAQKGFEVDAPLASALAAQGTEGLCPLFCHTNGTPLGLGAQVTNPNLAAVLLREALASSPDLVGNALLNLLVRDLGLELPSVQPKPSLEPALQLLLPQGVLFTTPGPSAGPELMGLLESTLHSKTPSPASCSSLLQTAETPVSSALATVDSHGSMLLLTSSLNSSFGSGHLSPSTGVLLSNLEASSVPSTWACPLILRGNLDDTEDDMLGLVASGIPRGAKAMACTLFNHLTTPQTQQQVQHQAQQRPTESPGICGKEALLQVVVHAEHAQVSSIPSGCCPFQGY.

At 1–49 (MDATTGAVLYQKLQLWEPGMESEEEEEEEEIAEPLVLSLRRLQNTPGNK) the chain is on the cytoplasmic side. The chain crosses the membrane as a helical; Signal-anchor for type II membrane protein span at residues 50 to 70 (VGGLPGAWTRLLAGLLLLAVS). Over 71-498 (SSLALRQLQG…PSGCCPFQGY (428 aa)) the chain is Extracellular. N-linked (GlcNAc...) asparagine glycans are attached at residues N162, N167, and N376.

It belongs to the gamma-glutamyltransferase family. Heterodimer composed of the light and heavy chains. The active site is located in the light chain. In terms of processing, cleaved by autocatalysis into a large and a small subunit and the autocatalytic cleavage is essential to the functional activation of the enzyme.

Its subcellular location is the membrane. The enzyme catalyses an N-terminal (5-L-glutamyl)-[peptide] + an alpha-amino acid = 5-L-glutamyl amino acid + an N-terminal L-alpha-aminoacyl-[peptide]. The catalysed reaction is glutathione + H2O = L-cysteinylglycine + L-glutamate. It catalyses the reaction an S-substituted glutathione + H2O = an S-substituted L-cysteinylglycine + L-glutamate. Its pathway is sulfur metabolism; glutathione metabolism. Functionally, hydrolyzes and transfers gamma-glutamyl moieties from glutathione and other gamma-glutamyl compounds to acceptors. In Rattus norvegicus (Rat), this protein is Glutathione hydrolase 6.